The following is a 116-amino-acid chain: Ribonuclease P protein component (116 aa).

The protein belongs to the RnpA family. In terms of assembly, consists of a catalytic RNA component (M1 or rnpB) and a protein subunit.

The catalysed reaction is Endonucleolytic cleavage of RNA, removing 5'-extranucleotides from tRNA precursor.. RNaseP catalyzes the removal of the 5'-leader sequence from pre-tRNA to produce the mature 5'-terminus. It can also cleave other RNA substrates such as 4.5S RNA. The protein component plays an auxiliary but essential role in vivo by binding to the 5'-leader sequence and broadening the substrate specificity of the ribozyme. The chain is Ribonuclease P protein component from Picosynechococcus sp. (strain ATCC 27264 / PCC 7002 / PR-6) (Agmenellum quadruplicatum).